A 440-amino-acid chain; its full sequence is Adenylosuccinate lyase (440 aa).

N(6)-(1,2-dicarboxyethyl)-AMP-binding positions include 4 to 5 (RY), 67 to 69 (KHD), and 93 to 94 (TS). Histidine 141 (proton donor/acceptor) is an active-site residue. Glutamine 212 lines the N(6)-(1,2-dicarboxyethyl)-AMP pocket. Serine 262 serves as the catalytic Proton donor/acceptor. N(6)-(1,2-dicarboxyethyl)-AMP is bound by residues serine 263, 268–270 (KRN), asparagine 276, and 307–311 (SVERF).

Belongs to the lyase 1 family. Adenylosuccinate lyase subfamily. In terms of assembly, homotetramer. Residues from neighboring subunits contribute catalytic and substrate-binding residues to each active site.

It catalyses the reaction N(6)-(1,2-dicarboxyethyl)-AMP = fumarate + AMP. It carries out the reaction (2S)-2-[5-amino-1-(5-phospho-beta-D-ribosyl)imidazole-4-carboxamido]succinate = 5-amino-1-(5-phospho-beta-D-ribosyl)imidazole-4-carboxamide + fumarate. The protein operates within purine metabolism; AMP biosynthesis via de novo pathway; AMP from IMP: step 2/2. Its pathway is purine metabolism; IMP biosynthesis via de novo pathway; 5-amino-1-(5-phospho-D-ribosyl)imidazole-4-carboxamide from 5-amino-1-(5-phospho-D-ribosyl)imidazole-4-carboxylate: step 2/2. In terms of biological role, catalyzes two reactions in de novo purine nucleotide biosynthesis. Catalyzes the breakdown of 5-aminoimidazole- (N-succinylocarboxamide) ribotide (SAICAR or 2-[5-amino-1-(5-phospho-beta-D-ribosyl)imidazole-4-carboxamido]succinate) to 5-aminoimidazole-4-carboxamide ribotide (AICAR or 5-amino-1-(5-phospho-beta-D-ribosyl)imidazole-4-carboxamide) and fumarate, and of adenylosuccinate (ADS or N(6)-(1,2-dicarboxyethyl)-AMP) to adenosine monophosphate (AMP) and fumarate. The protein is Adenylosuccinate lyase (purB) of Helicobacter pylori (strain J99 / ATCC 700824) (Campylobacter pylori J99).